The following is a 429-amino-acid chain: Glutamate-1-semialdehyde 2,1-aminomutase (429 aa).

Lys265 bears the N6-(pyridoxal phosphate)lysine mark.

Belongs to the class-III pyridoxal-phosphate-dependent aminotransferase family. HemL subfamily. As to quaternary structure, homodimer. It depends on pyridoxal 5'-phosphate as a cofactor.

The protein resides in the cytoplasm. It carries out the reaction (S)-4-amino-5-oxopentanoate = 5-aminolevulinate. The protein operates within porphyrin-containing compound metabolism; protoporphyrin-IX biosynthesis; 5-aminolevulinate from L-glutamyl-tRNA(Glu): step 2/2. This Shewanella piezotolerans (strain WP3 / JCM 13877) protein is Glutamate-1-semialdehyde 2,1-aminomutase.